Here is a 696-residue protein sequence, read N- to C-terminus: SLIT and NTRK-like protein 1 (696 aa).

The N-terminal stretch at 1-17 (MLLWILLLETSLCFAAG) is a signal peptide. The region spanning 18 to 57 (NVTGDVCKEKICSCNEIEGDLHVDCEKKGFTSLQRFTAPT) is the LRRNT 1 domain. At 18 to 622 (NVTGDVCKEK…SRVSISVLVP (605 aa)) the chain is on the extracellular side. 6 LRR repeats span residues 59–80 (QFYHLFLHGNSLTRLFPNEFAN), 83–104 (NAVSLHMENNGLHEIVPGAFLG), 106–128 (QLVKRLHINNNKIKSFRKQTFLG), 131–152 (DLEYLQADFNLLRDIDPGAFQD), 155–176 (KLEVLILNDNLISTLPANVFQY), and 178–199 (PITHLDLRGNRLKTLPYEEVLE). The LRRCT 1 domain maps to 212-263 (NPWDCTCDLLSLKEWLENIPKNALIGRVVCEAPTRLQGKDLNETTEQDLCPL). The segment at 265 to 314 (NRVDSSLPAPPAQEETFAPGPLPTPFKTNGQEDHATPGSAPNGGTKIPGN) is disordered. In terms of domain architecture, LRRNT 2 spans 332–373 (NKPLANSLPCPGGCSCDHIPGSGLKMNCNNRNVSSLADLKPK). LRR repeat units follow at residues 376 to 397 (NVQELFLRDNKIHSIRKSHFVD), 400 to 421 (NLILLDLGNNNIATVENNTFKN), 424 to 445 (DLRWLYMDSNYLDTLSREKFAG), 448 to 469 (NLEYLNVEYNAIQLILPGTFNA), 472 to 493 (KLRILILNNNLLRSLPVDVFAG), and 495 to 516 (SLSKLSLHNNYFMYLPVAGVLD). The LRRCT 2 domain occupies 529–580 (NPWECSCTIVPFKQWAERLGSEVLMSDLKCETPVNFFRKDFMLLSNDEICPQ). The helical transmembrane segment at 623–643 (GLLLVFVTSAFTVVGMLVFIL) threads the bilayer. Over 644-696 (RNRKRSKRRDANSSASEINSLQTVCDSSYWHNGPYNADGAHRVYDCGSHSLSD) the chain is Cytoplasmic. Phosphoserine; by CK2 is present on Ser695.

Belongs to the SLITRK family. In terms of assembly, can form homodimers; homodimerization requires repeat LRR 2. Interacts with YWHAB, YWHAE, YWHAG, YWHAH, SFN, YWHAQ and YWHAZ. In terms of processing, undergoes proteolytic cleavage that results in shedding of the ectodomain and cleavage of the C-terminal cytoplasmic tail. Glycosylated. Phosphorylation at Ser-695 is necessary for proper function in promoting neurite outgrowth. In terms of tissue distribution, expressed predominantly in the frontal lobe of the cerebral cortex of the brain. Also expressed in some astrocytic brain tumors such as astrocytomas, oligodendrogliomas, glioblastomas, gangliogliomas and primitive neuroectodermal tumors.

The protein resides in the membrane. It is found in the secreted. The protein localises to the synapse. It is involved in synaptogenesis and promotes excitatory synapse differentiation. Enhances neuronal dendrite outgrowth. The protein is SLIT and NTRK-like protein 1 (SLITRK1) of Homo sapiens (Human).